Here is a 173-residue protein sequence, read N- to C-terminus: Photosystem I assembly protein Ycf3 (173 aa).

TPR repeat units lie at residues 35 to 68, 72 to 105, and 120 to 153; these read AFVYYRDGMSAQADGEYAEALDNYYEALTLEEDP, SYILYNIGIIHASNGEHEKALEYYEEAIQLNPRM, and GEKAREDGQQAEAEALYDKAAEYWKQAIRLAPNN.

It belongs to the Ycf3 family.

Its subcellular location is the cellular thylakoid membrane. In terms of biological role, essential for the assembly of the photosystem I (PSI) complex. May act as a chaperone-like factor to guide the assembly of the PSI subunits. The protein is Photosystem I assembly protein Ycf3 of Microcystis aeruginosa (strain NIES-843 / IAM M-2473).